The following is a 441-amino-acid chain: Tol-Pal system protein TolB (441 aa).

An N-terminal signal peptide occupies residues 1-39 (MPTMTPAFSRASLSEALRSYGLALLLFLATLLAWQPAHA).

Belongs to the TolB family. As to quaternary structure, the Tol-Pal system is composed of five core proteins: the inner membrane proteins TolA, TolQ and TolR, the periplasmic protein TolB and the outer membrane protein Pal. They form a network linking the inner and outer membranes and the peptidoglycan layer.

The protein localises to the periplasm. Its function is as follows. Part of the Tol-Pal system, which plays a role in outer membrane invagination during cell division and is important for maintaining outer membrane integrity. This chain is Tol-Pal system protein TolB, found in Bordetella avium (strain 197N).